The chain runs to 457 residues: MATLRQVFSISELRQKIFFTFSLLALCRIGVFIPVPGINGDRAVAYFNQLLGSSQNLFQLADIFSGGAFAQMTVIALGVVPYISASIIVQLLVVFMPTLQREMREAPDQGKRKLGRMTRLFTLLLACVQSLLFAKFALRMNLVVPGIVLPAMLSLKLFGIPCVFYLTTVVVMTTGTLLLMWIGEQISDKGIGNGISLIITLGMLASFPSVLGSIFNKLNLGSQDPSEFGIVSLLVLCAVFVFVLMATVLIIEGVRKVPVQHARRIIGRREVLGGGSYLPLKVNYAGVIPVIFASSLLMFPATIGQFLSSESSWLKRIATMLSPGSVVYSIFYVLLIIFFTYFWTATQFRPEQIASEMKKNGAFIPGIRQGKPTQSYLEYTMNRVTLLGAVFLAVVAILPSILGRILRVDANVSYFLGGTAMLIVVGVVLDTMKQIDAFLLVRRYDGVLKKDRPKGRR.

Transmembrane regions (helical) follow at residues 17-37, 75-95, 120-140, 163-183, 195-215, 230-250, 287-307, 326-346, 386-406, and 412-432; these read IFFT…PVPG, IALG…LVVF, LFTL…ALRM, VFYL…MWIG, ISLI…GSIF, IVSL…TVLI, VIPV…GQFL, VVYS…WTAT, LLGA…GRIL, and VSYF…LDTM.

Belongs to the SecY/SEC61-alpha family. As to quaternary structure, component of the Sec protein translocase complex. Heterotrimer consisting of SecY, SecE and SecG subunits. The heterotrimers can form oligomers, although 1 heterotrimer is thought to be able to translocate proteins. Interacts with the ribosome. Interacts with SecDF, and other proteins may be involved. Interacts with SecA.

Its subcellular location is the cell inner membrane. The central subunit of the protein translocation channel SecYEG. Consists of two halves formed by TMs 1-5 and 6-10. These two domains form a lateral gate at the front which open onto the bilayer between TMs 2 and 7, and are clamped together by SecE at the back. The channel is closed by both a pore ring composed of hydrophobic SecY resides and a short helix (helix 2A) on the extracellular side of the membrane which forms a plug. The plug probably moves laterally to allow the channel to open. The ring and the pore may move independently. In Chlamydia muridarum (strain MoPn / Nigg), this protein is Protein translocase subunit SecY.